The following is a 314-amino-acid chain: tRNA(Ile)-lysidine synthase (314 aa).

ATP is bound at residue 37–42 (SGGPDS).

The protein belongs to the tRNA(Ile)-lysidine synthase family.

It is found in the cytoplasm. It catalyses the reaction cytidine(34) in tRNA(Ile2) + L-lysine + ATP = lysidine(34) in tRNA(Ile2) + AMP + diphosphate + H(+). In terms of biological role, ligates lysine onto the cytidine present at position 34 of the AUA codon-specific tRNA(Ile) that contains the anticodon CAU, in an ATP-dependent manner. Cytidine is converted to lysidine, thus changing the amino acid specificity of the tRNA from methionine to isoleucine. This is tRNA(Ile)-lysidine synthase from Corynebacterium glutamicum (strain ATCC 13032 / DSM 20300 / JCM 1318 / BCRC 11384 / CCUG 27702 / LMG 3730 / NBRC 12168 / NCIMB 10025 / NRRL B-2784 / 534).